A 312-amino-acid chain; its full sequence is tRNA pseudouridine synthase B (312 aa).

Catalysis depends on aspartate 49, which acts as the Nucleophile.

The protein belongs to the pseudouridine synthase TruB family. Type 1 subfamily.

It catalyses the reaction uridine(55) in tRNA = pseudouridine(55) in tRNA. Its function is as follows. Responsible for synthesis of pseudouridine from uracil-55 in the psi GC loop of transfer RNAs. This is tRNA pseudouridine synthase B from Chelativorans sp. (strain BNC1).